An 848-amino-acid chain; its full sequence is Trimethylamine-N-oxide reductase 1 (848 aa).

The tat-type signal signal peptide spans 1–39 (MNNNDLFQASRRRFLAQLGGLTVAGMLGPSLLTSRRATA). Ser-191 serves as a coordination point for Mo-bis(molybdopterin guanine dinucleotide).

This sequence belongs to the prokaryotic molybdopterin-containing oxidoreductase family. Interacts with the N-terminal domain of TorC. Mo-bis(molybdopterin guanine dinucleotide) is required as a cofactor. In terms of processing, predicted to be exported by the Tat system. The position of the signal peptide cleavage has not been experimentally proven.

Its subcellular location is the periplasm. It catalyses the reaction trimethylamine + 2 Fe(III)-[cytochrome c] + H2O = trimethylamine N-oxide + 2 Fe(II)-[cytochrome c] + 3 H(+). Functionally, reduces trimethylamine-N-oxide (TMAO) into trimethylamine; an anaerobic reaction coupled to energy-yielding reactions. In Escherichia coli O157:H7, this protein is Trimethylamine-N-oxide reductase 1 (torA).